A 132-amino-acid polypeptide reads, in one-letter code: Small ribosomal subunit protein uS8 (132 aa).

Belongs to the universal ribosomal protein uS8 family. As to quaternary structure, part of the 30S ribosomal subunit. Contacts proteins S5 and S12.

One of the primary rRNA binding proteins, it binds directly to 16S rRNA central domain where it helps coordinate assembly of the platform of the 30S subunit. This Rubrobacter xylanophilus (strain DSM 9941 / JCM 11954 / NBRC 16129 / PRD-1) protein is Small ribosomal subunit protein uS8.